The following is a 251-amino-acid chain: Small ribosomal subunit protein uS2 (251 aa).

It belongs to the universal ribosomal protein uS2 family.

This is Small ribosomal subunit protein uS2 from Cereibacter sphaeroides (strain ATCC 17029 / ATH 2.4.9) (Rhodobacter sphaeroides).